The sequence spans 122 residues: Large ribosomal subunit protein uL14c (122 aa).

Belongs to the universal ribosomal protein uL14 family. As to quaternary structure, part of the 50S ribosomal subunit.

The protein localises to the plastid. It is found in the chloroplast. Its function is as follows. Binds to 23S rRNA. The protein is Large ribosomal subunit protein uL14c of Chlorella vulgaris (Green alga).